The following is a 594-amino-acid chain: ATP-dependent zinc metalloprotease FtsH 1 (594 aa).

Over 1-2 the chain is Cytoplasmic; sequence MR. A helical transmembrane segment spans residues 3–23; the sequence is WWAGAALLLAALLFGRPAAAM. Over 24–92 the chain is Extracellular; it reads EAQPVAYSEF…RVEFVRPADP (69 aa). Residues 93–113 form a helical membrane-spanning segment; sequence IAFRTLLRFIPPLLILGAILW. Over 114–594 the chain is Cytoplasmic; the sequence is FTRRTAGGSG…ANSRGDEGNQ (481 aa). Residue 186–193 participates in ATP binding; the sequence is GPPGTGKT. His-408 contacts Zn(2+). Glu-409 is a catalytic residue. Zn(2+) is bound by residues His-412 and Asp-485.

In the central section; belongs to the AAA ATPase family. This sequence in the C-terminal section; belongs to the peptidase M41 family. As to quaternary structure, homohexamer. Zn(2+) serves as cofactor.

The protein resides in the cell membrane. Its function is as follows. Acts as a processive, ATP-dependent zinc metallopeptidase for both cytoplasmic and membrane proteins. Plays a role in the quality control of integral membrane proteins. This chain is ATP-dependent zinc metalloprotease FtsH 1, found in Symbiobacterium thermophilum (strain DSM 24528 / JCM 14929 / IAM 14863 / T).